Consider the following 371-residue polypeptide: DNA replication and repair protein RecF (371 aa).

30 to 37 is an ATP binding site; it reads GANAQGKT.

The protein belongs to the RecF family.

Its subcellular location is the cytoplasm. Functionally, the RecF protein is involved in DNA metabolism; it is required for DNA replication and normal SOS inducibility. RecF binds preferentially to single-stranded, linear DNA. It also seems to bind ATP. The polypeptide is DNA replication and repair protein RecF (Lacticaseibacillus paracasei (strain ATCC 334 / BCRC 17002 / CCUG 31169 / CIP 107868 / KCTC 3260 / NRRL B-441) (Lactobacillus paracasei)).